The following is a 446-amino-acid chain: Xylose isomerase 2 (446 aa).

Catalysis depends on residues His109 and Asp112. The Mg(2+) site is built by Glu240, Glu276, His279, Asp304, Asp315, Asp317, and Asp347.

Belongs to the xylose isomerase family. As to quaternary structure, homotetramer. It depends on Mg(2+) as a cofactor.

It is found in the cytoplasm. It carries out the reaction alpha-D-xylose = alpha-D-xylulofuranose. In Xanthomonas campestris pv. campestris (strain 8004), this protein is Xylose isomerase 2.